A 738-amino-acid chain; its full sequence is DNA repair and recombination protein RAD54-like (738 aa).

Residues 1-31 form a disordered region; the sequence is MRRSLAPSQVAKRKQGPDSDDEEDWEPDMEP. Residues 18–29 are compositionally biased toward acidic residues; sequence DSDDEEDWEPDM. A Helicase ATP-binding domain is found at 164–339; that stretch reads GRRIENSYGC…FSLVHFVNSG (176 aa). 177–184 contributes to the ATP binding site; sequence DEMGLGKT. The DEAH box signature appears at 290–293; that stretch reads DEGH. The Helicase C-terminal domain occupies 493–647; sequence LVLDYILAMT…CVVDEEQDVE (155 aa). A phosphoserine mark is found at S566 and S567.

As to quaternary structure, homohexamer. Interacts with RAD51. Phosphorylated. Phosphorylations at Ser-566 and Ser-567 allow efficient removal of RAD51 filaments from DNA.

The enzyme catalyses ATP + H2O = ADP + phosphate + H(+). Functionally, plays an essential role in homologous recombination (HR) which is a major pathway for repairing DNA double-strand breaks (DSBs), single-stranded DNA (ssDNA) gaps, and stalled or collapsed replication forks. Acts as a molecular motor during the homology search and guides RAD51 ssDNA along a donor dsDNA thereby changing the homology search from the diffusion-based mechanism to a motor-guided mechanism. Also plays an essential role in RAD51-mediated synaptic complex formation which consists of three strands encased in a protein filament formed once homology is recognized. Once DNA strand exchange occured, dissociates RAD51 from nucleoprotein filaments formed on dsDNA. The polypeptide is DNA repair and recombination protein RAD54-like (rad54l) (Danio rerio (Zebrafish)).